The chain runs to 464 residues: Protein FAM90A13 (464 aa).

3 disordered regions span residues 1 to 42 (MMAR…DPRL), 69 to 389 (VPAT…HDGA), and 411 to 437 (APSFHSPEKPGAFLAQSPHVSEKSEAP). 2 stretches are compositionally biased toward basic and acidic residues: residues 74-89 (GKKEGKENLKPWKPRG) and 97-114 (NKDKGEKEERPRQQDPQR). Over residues 180 to 197 (LASLSPLRKASLSSSSSL) the composition is skewed to low complexity.

The protein belongs to the FAM90 family.

The chain is Protein FAM90A13 from Homo sapiens (Human).